The chain runs to 219 residues: Large ribosomal subunit protein uL3 (219 aa).

Residues 133-145 (GRASHGNSRSHNV) are compositionally biased toward polar residues. The disordered stretch occupies residues 133 to 153 (GRASHGNSRSHNVPGSIGMAQ). Position 153 is an N5-methylglutamine (Gln153).

Belongs to the universal ribosomal protein uL3 family. Part of the 50S ribosomal subunit. Forms a cluster with proteins L14 and L19. In terms of processing, methylated by PrmB.

Its function is as follows. One of the primary rRNA binding proteins, it binds directly near the 3'-end of the 23S rRNA, where it nucleates assembly of the 50S subunit. The protein is Large ribosomal subunit protein uL3 of Paraburkholderia phymatum (strain DSM 17167 / CIP 108236 / LMG 21445 / STM815) (Burkholderia phymatum).